The primary structure comprises 206 residues: Small ribosomal subunit protein uS4A (206 aa).

The 66-residue stretch at Met-98 to Asn-163 folds into the S4 RNA-binding domain.

Belongs to the universal ribosomal protein uS4 family. Part of the 30S ribosomal subunit. Contacts protein S5. The interaction surface between S4 and S5 is involved in control of translational fidelity.

One of the primary rRNA binding proteins, it binds directly to 16S rRNA where it nucleates assembly of the body of the 30S subunit. Its function is as follows. With S5 and S12 plays an important role in translational accuracy. The protein is Small ribosomal subunit protein uS4A of Clostridium perfringens (strain SM101 / Type A).